Reading from the N-terminus, the 785-residue chain is Leucyl aminopeptidase (785 aa).

Residues Glu-106 and Gly-238 to Asn-242 contribute to the substrate site. His-273 is a binding site for Zn(2+). Glu-274 (proton acceptor) is an active-site residue. Zn(2+)-binding residues include His-277 and Glu-296.

It belongs to the peptidase M1 family. In terms of assembly, co-immunoprecipitates with the 60 kDa chaperonin. It depends on Zn(2+) as a cofactor. In terms of processing, can be phosphorylated by cell extracts.

It is found in the cytoplasm. The catalysed reaction is Release of an N-terminal amino acid, Xaa-|-Yaa-, in which Xaa is preferably Leu, but may be other amino acids including Pro although not Arg or Lys, and Yaa may be Pro. Amino acid amides and methyl esters are also readily hydrolyzed, but rates on arylamides are exceedingly low.. Preferentially acts as a leucyl-aminopeptidase, although it also has activity against other substrates. This is Leucyl aminopeptidase (ape2) from Saccharolobus solfataricus (strain ATCC 35092 / DSM 1617 / JCM 11322 / P2) (Sulfolobus solfataricus).